Reading from the N-terminus, the 361-residue chain is Anthranilate phosphoribosyltransferase (361 aa).

Residues Gly80, 83-84 (GD), Thr88, 90-93 (NVST), 108-116 (KHGNYSVSS), and Ser120 contribute to the 5-phospho-alpha-D-ribose 1-diphosphate site. Position 80 (Gly80) interacts with anthranilate. A Mg(2+)-binding site is contributed by Ser92. Asn111 serves as a coordination point for anthranilate. Residue Arg166 participates in anthranilate binding. 2 residues coordinate Mg(2+): Asp224 and Glu225. Positions 338-361 (EGDGEAASTDSAAASTTAGPEDDD) are disordered. Residues 343–355 (AASTDSAAASTTA) show a composition bias toward low complexity.

The protein belongs to the anthranilate phosphoribosyltransferase family. As to quaternary structure, homodimer. Mg(2+) is required as a cofactor.

It catalyses the reaction N-(5-phospho-beta-D-ribosyl)anthranilate + diphosphate = 5-phospho-alpha-D-ribose 1-diphosphate + anthranilate. Its pathway is amino-acid biosynthesis; L-tryptophan biosynthesis; L-tryptophan from chorismate: step 2/5. Its function is as follows. Catalyzes the transfer of the phosphoribosyl group of 5-phosphorylribose-1-pyrophosphate (PRPP) to anthranilate to yield N-(5'-phosphoribosyl)-anthranilate (PRA). This is Anthranilate phosphoribosyltransferase from Halorubrum lacusprofundi (strain ATCC 49239 / DSM 5036 / JCM 8891 / ACAM 34).